We begin with the raw amino-acid sequence, 393 residues long: Phosphopentomutase (393 aa).

Mn(2+) contacts are provided by Asp-15, Asp-288, His-293, Asp-329, His-330, and His-341.

The protein belongs to the phosphopentomutase family. Mn(2+) serves as cofactor.

Its subcellular location is the cytoplasm. It catalyses the reaction 2-deoxy-alpha-D-ribose 1-phosphate = 2-deoxy-D-ribose 5-phosphate. The enzyme catalyses alpha-D-ribose 1-phosphate = D-ribose 5-phosphate. The protein operates within carbohydrate degradation; 2-deoxy-D-ribose 1-phosphate degradation; D-glyceraldehyde 3-phosphate and acetaldehyde from 2-deoxy-alpha-D-ribose 1-phosphate: step 1/2. Isomerase that catalyzes the conversion of deoxy-ribose 1-phosphate (dRib-1-P) and ribose 1-phosphate (Rib-1-P) to deoxy-ribose 5-phosphate (dRib-5-P) and ribose 5-phosphate (Rib-5-P), respectively. The sequence is that of Phosphopentomutase from Halalkalibacterium halodurans (strain ATCC BAA-125 / DSM 18197 / FERM 7344 / JCM 9153 / C-125) (Bacillus halodurans).